A 195-amino-acid polypeptide reads, in one-letter code: MEKFITLFSTAVPLFIDNIDTDQIIPARFLKLTTKSDFGKNLFRDWRYDSNGKIKKNFILNKKKYSGNILITGKNFGCGSSREHAAWAIRDYGFKVVISNIFADIFKQNALNNGLLTIELKKDFINLIYKKIFLNPNILFEINLEQQYVKFENNKELFKIDDFKKKCFINGYDDIELLFSIKKKIEIFEKKNIYN.

Belongs to the LeuD family. LeuD type 1 subfamily. As to quaternary structure, heterodimer of LeuC and LeuD.

It catalyses the reaction (2R,3S)-3-isopropylmalate = (2S)-2-isopropylmalate. It participates in amino-acid biosynthesis; L-leucine biosynthesis; L-leucine from 3-methyl-2-oxobutanoate: step 2/4. Catalyzes the isomerization between 2-isopropylmalate and 3-isopropylmalate, via the formation of 2-isopropylmaleate. The polypeptide is 3-isopropylmalate dehydratase small subunit (Karelsulcia muelleri (strain GWSS) (Sulcia muelleri)).